The primary structure comprises 549 residues: Oxygen-dependent choline dehydrogenase (549 aa).

4 to 33 (DFVIIGSGSAGSALAYRLSEDGRNSVIVLE) serves as a coordination point for FAD. Residue His-465 is the Proton acceptor of the active site.

It belongs to the GMC oxidoreductase family. Requires FAD as cofactor.

The protein localises to the cell membrane. It carries out the reaction choline + A = betaine aldehyde + AH2. It catalyses the reaction betaine aldehyde + NAD(+) + H2O = glycine betaine + NADH + 2 H(+). The protein operates within amine and polyamine biosynthesis; betaine biosynthesis via choline pathway; betaine aldehyde from choline (cytochrome c reductase route): step 1/1. In terms of biological role, involved in the biosynthesis of the osmoprotectant glycine betaine. Catalyzes the oxidation of choline to betaine aldehyde and betaine aldehyde to glycine betaine at the same rate. The chain is Oxygen-dependent choline dehydrogenase from Rhizobium meliloti (strain 1021) (Ensifer meliloti).